Reading from the N-terminus, the 613-residue chain is Ribosome-associated molecular chaperone SSB1 (613 aa).

Residues 1-391 (MADGVFQGAI…ILTGQSTSDE (391 aa)) form a nucleotide binding domain (NBD) region. ATP-binding positions include 16–18 (TTY), K73, 205–207 (GGT), 271–278 (ERAKRTLS), and G342. Positions 392–402 (TKDLLLLDVAP) are inter-domain linker. The substrate binding domain (SBD) stretch occupies residues 403–613 (LSLGVGMQGD…RVVTKAMSSR (211 aa)). The tract at residues 516–612 (SEDIEKMVNQ…KRVVTKAMSS (97 aa)) is lid domain (SBDalpha). Residues 574–582 (IEAALADAL) carry the Nuclear export signal motif.

It belongs to the heat shock protein 70 family. Ssb-type Hsp70 subfamily. As to quaternary structure, binds to ribosomes. Binds close to the ribosomal tunnel exit via contacts with both ribosomal proteins and rRNA. Directly interacts with nascent polypeptides. This interaction is dependent on the ribosome-associated complex (RAC). Interacts with SSE1. Interacts with FES1.

The protein resides in the cytoplasm. It catalyses the reaction ATP + H2O = ADP + phosphate + H(+). Functionally, ribosome-bound, Hsp70-type chaperone that assists in the cotranslational folding of newly synthesized proteins in the cytosol. Stimulates folding by interacting with nascent chains, binding to short, largely hydrophobic sequences exposed by unfolded proteins, thereby stabilizing longer, more slowly translated, and aggregation-prone nascent polypeptides and domains that cannot fold stably until fully synthesized. The Hsp70-protein substrate interaction depends on ATP-binding and on allosteric regulation between the NBD and the SBD. The ATP-bound state is characterized by a fast exchange rate of substrate (low affinity state), while in the ADP-bound state exchange is much slower (high affinity state). During the Hsp70 cycle, the chaperone switches between the ATP-bound state (open conformation) and the ADP-bound state (closed conformation) by major conformational rearrangements involving mainly the lid domain. Ssb cooperates with a specific Hsp40/Hsp70 co-chaperone termed the ribosome-associated complex (RAC), which stimulates the ATPase activity of the ribosome-associated pool of Ssbs and switches it to the high affinity substrate binding state. Hsp110 chaperone SSE1 and FES1 act as nucleotide exchange factors that cause substrate release. This is Ribosome-associated molecular chaperone SSB1 (SSB1) from Nakaseomyces delphensis (Yeast).